The chain runs to 273 residues: Fos-related antigen 1 (273 aa).

Disordered regions lie at residues 1–46 and 60–114; these read MYRD…IDSS and GPTG…RRER. The segment covering 7–35 has biased composition (low complexity); it reads EPGPSSGAGSPYGRPAQPPQAQAQTAQQQ. The region spanning 105–168 is the bZIP domain; it reads EERRRVRRER…ERLELVLEAH (64 aa). The basic motif stretch occupies residues 107–127; sequence RRRVRRERNKLAAAKCRNRRK. The tract at residues 133 to 161 is leucine-zipper; the sequence is LQAETDKLEDEKSGLQREIEELQKQKERL. Positions 169–182 are enriched in basic and acidic residues; that stretch reads RPICKIPEGDKKDP. The disordered stretch occupies residues 169–273; sequence RPICKIPEGD…PLGSPTLLAL (105 aa). Low complexity-rich tracts occupy residues 217 to 235 and 254 to 273; these read LHTP…TPSL and SSSS…LLAL. Ser267 is modified (phosphoserine).

This sequence belongs to the bZIP family. Fos subfamily. In terms of assembly, heterodimer. Interacts with the BAF multiprotein chromatin-remodeling complex subunits SMARCB1 and SMARCD1. Interacts with ARID1A and JUN.

The protein resides in the nucleus. The polypeptide is Fos-related antigen 1 (Fosl1) (Mus musculus (Mouse)).